The primary structure comprises 763 residues: MKGGALHCRCSKCFAAPPKRRVKRRPRVLTLLSLPEDVLLYVLECLPAVDILSMREVHPHLRSLVDSHSSVWARASFQDVWPSPENLNLFERAAECGNFEACVKLGIAYLYNEGLSLSDDGRAEVNGLKASRFFSLTERLNSGADPFVWLFIRPPWSSSGSCCKAVVFDSLKEECGTVTSEEGATGALKGSIQYCLAKVLSLFEDDDKKREALGMLESSASHGCLHSSYLLWETKQKTALSDPGRYLQSFRQLRDYAARGCWDAQISLAKACGHKNQLSQEQRSASELVNQVFQSSLPINKTSIFTTQKGMNDTMRYILIDWLVEVATMKDFSSLCLHMTVGLVDRYLKLRSVPRAKLQLVGIACMVICTRFISKEILTIREAVWLTDNTYKYEDLVRMMGEIISALEGKIRMPTVVDYKDVLSHLIPLDRSTLHLCSYISELSLLYTELSTYSPAQLAAGALLLARILHKQARPWPAQLAETTGFTLEHLTPCVVLLHKKCFHDDAPKDYRQVSLTAVKQRFQDDLYDQISKEKVMDHSHLCELLGVPCRDSESPASCPNAADFHQFLCSPSGSKTKRRREDSIQEDRGSFVTTPTAELSNQEEDLLGDFLDWSLETSCSGYEGDRESEGEREGEVTAPSGVLDLSLLITEHQQCQDTTSDDDSLVPLHPIPLLSKLENGTHSTEGCAEKSSGYSSVSSGGSPTSSSSPPGLPFTPTPGLNHSKLMPIPFPQPCSPLFKASRRQVKRKNQAQHSEDNLSDEL.

Residues 19–27 (KRRVKRRPR) carry the Nuclear localization signal 1 motif. The region spanning 28 to 75 (VLTLLSLPEDVLLYVLECLPAVDILSMREVHPHLRSLVDSHSSVWARA) is the F-box domain. Residues 299-411 (INKTSIFTTQ…EIISALEGKI (113 aa)) form the Cyclin N-terminal domain. 2 consecutive short sequence motifs (d box) follow at residues 316 to 319 (RYIL) and 355 to 358 (RAKL). Disordered regions lie at residues 574 to 600 (GSKT…TAEL) and 677 to 763 (KLEN…SDEL). The short motif at 575–581 (SKTKRRR) is the Nuclear localization signal 2 element. A compositionally biased stretch (basic and acidic residues) spans 580–590 (RREDSIQEDRG). The interval 589-747 (RGSFVTTPTA…LFKASRRQVK (159 aa)) is PEST. Residues 692-710 (SSGYSSVSSGGSPTSSSSP) are compositionally biased toward low complexity. Basic residues predominate over residues 741–751 (ASRRQVKRKNQ).

This sequence belongs to the cyclin family. Cyclin AB subfamily. In terms of assembly, component of the SCF(CCNF) complex.

The protein resides in the nucleus. It localises to the cytoplasm. The protein localises to the perinuclear region. Its subcellular location is the cytoskeleton. It is found in the microtubule organizing center. The protein resides in the centrosome. It localises to the centriole. Its function is as follows. Substrate recognition component of the SCF(CCNF) E3 ubiquitin-protein ligase complex which mediates the ubiquitination and subsequent proteasomal degradation of target proteins. The SCF(CCNF) E3 ubiquitin-protein ligase complex is an integral component of the ubiquitin proteasome system (UPS) and links proteasome degradation to the cell cycle. Mediates the substrate recognition and the proteasomal degradation of various target proteins during G2 phase involved in the regulation of cell cycle progression and in the maintenance of genome stability. The chain is Cyclin-F (ccnf) from Xenopus tropicalis (Western clawed frog).